An 830-amino-acid chain; its full sequence is WD repeat-containing protein 75 (830 aa).

WD repeat units follow at residues 4–42 (EGVR…KVYS), 46–85 (EECV…KLWD), 89–130 (GILI…QLVS), 144–183 (RQLT…YFFK), 192–230 (LPST…RLWR), 236–275 (QKYT…VEWR), 278–317 (SEKN…TVIH), 323–361 (SAVI…QFYS), and 375–422 (QQEY…KLWN). Lys426 participates in a covalent cross-link: Glycyl lysine isopeptide (Lys-Gly) (interchain with G-Cter in SUMO2). WD repeat units follow at residues 429 to 473 (GFVL…KVWI), 486 to 524 (AWTC…TIWD), 528 to 568 (WELK…CCWN), and 573 to 610 (SIQW…FVFK). Phosphoserine occurs at positions 663 and 671. Lys675 participates in a covalent cross-link: Glycyl lysine isopeptide (Lys-Gly) (interchain with G-Cter in SUMO2). A disordered region spans residues 761–807 (KSAEEVPDDVDMEGNKESDDSDEEYDLTEKDKETNNNTDLGEDAIHQ). Ser778 and Ser781 each carry phosphoserine. Residue Tyr785 is modified to Phosphotyrosine. Ser811 bears the Phosphoserine mark.

In terms of assembly, component of the proposed t-UTP subcomplex of the ribosomal small subunit (SSU) processome. SSU processome is composed of more than 70 proteins and the RNA chaperone small nucleolar RNA (snoRNA) U3.

The protein resides in the nucleus. Its subcellular location is the nucleolus. Ribosome biogenesis factor. Part of the small subunit (SSU) processome, first precursor of the small eukaryotic ribosomal subunit. During the assembly of the SSU processome in the nucleolus, many ribosome biogenesis factors, an RNA chaperone and ribosomal proteins associate with the nascent pre-rRNA and work in concert to generate RNA folding, modifications, rearrangements and cleavage as well as targeted degradation of pre-ribosomal RNA by the RNA exosome. Involved in nucleolar processing of pre-18S ribosomal RNA. Required for optimal pre-ribosomal RNA transcription by RNA polymerase I. The protein is WD repeat-containing protein 75 (Wdr75) of Mus musculus (Mouse).